A 364-amino-acid polypeptide reads, in one-letter code: Aminomethyltransferase (364 aa).

Belongs to the GcvT family. The glycine cleavage system is composed of four proteins: P, T, L and H.

It catalyses the reaction N(6)-[(R)-S(8)-aminomethyldihydrolipoyl]-L-lysyl-[protein] + (6S)-5,6,7,8-tetrahydrofolate = N(6)-[(R)-dihydrolipoyl]-L-lysyl-[protein] + (6R)-5,10-methylene-5,6,7,8-tetrahydrofolate + NH4(+). Its function is as follows. The glycine cleavage system catalyzes the degradation of glycine. The sequence is that of Aminomethyltransferase from Klebsiella pneumoniae subsp. pneumoniae (strain ATCC 700721 / MGH 78578).